The primary structure comprises 261 residues: Thioesterase TesA (261 aa).

Residues Ser-104, Asp-208, and His-236 contribute to the active site.

Belongs to the thioesterase family.

The enzyme catalyses a fatty acyl-CoA + H2O = a fatty acid + CoA + H(+). In terms of biological role, involved in the synthesis of both phthiocerol dimycocerosates (PDIMs) and phenolic glycolipids (PGLs), which are structurally related lipids non-covalently bound to the outer cell wall layer of M.tuberculosis and are important virulence factors. The polypeptide is Thioesterase TesA (tesA) (Mycobacterium leprae (strain TN)).